A 383-amino-acid polypeptide reads, in one-letter code: Methenyltetrahydrofolate synthase domain-containing protein (383 aa).

The disordered stretch occupies residues 249–301 (AGKDVTLQGEHQHLPEPGCQQTVPLSVGRRPPDTPGPETNSMEAAPGSPPGEG). Residues 306–379 (ADVYVGNLPG…DTLRVALARQ (74 aa)) form the RRM domain.

This is Methenyltetrahydrofolate synthase domain-containing protein (MTHFSD) from Homo sapiens (Human).